The primary structure comprises 264 residues: COP9 signalosome complex subunit 7b (264 aa).

The residue at position 2 (Ala2) is an N-acetylalanine. The region spanning 2–159 is the PCI domain; that stretch reads AGEQKPSSNL…QLLEVDFCIG (158 aa). A coiled-coil region spans residues 194-237; it reads RANQYKENHHRTQQQVEAEVSNIKKTLKATASSSAQEMEQQLAE. Residues 223 to 232 are compositionally biased toward polar residues; the sequence is TASSSAQEME. The tract at residues 223–264 is disordered; that stretch reads TASSSAQEMEQQLAERECPPHTEQRQPTKKMSKVKGLVSSRH. Over residues 235–248 the composition is skewed to basic and acidic residues; the sequence is LAERECPPHTEQRQ.

The protein belongs to the CSN7/EIF3M family. CSN7 subfamily. Component of the CSN complex, composed of COPS1/GPS1, COPS2, COPS3, COPS4, COPS5, COPS6, COPS7 (COPS7A or COPS7B) and COPS8 and COPS9. In the complex, it probably interacts directly with COPS1, COPS2, COPS4, COPS5, COPS6 and COPS8. Interacts with EIF3S6.

It is found in the cytoplasm. Its subcellular location is the nucleus. Component of the COP9 signalosome complex (CSN), a complex involved in various cellular and developmental processes. The CSN complex is an essential regulator of the ubiquitin (Ubl) conjugation pathway by mediating the deneddylation of the cullin subunits of SCF-type E3 ligase complexes, leading to decrease the Ubl ligase activity of SCF-type complexes such as SCF, CSA or DDB2. The complex is also involved in phosphorylation of p53/TP53, JUN, I-kappa-B-alpha/NFKBIA, ITPK1 and IRF8/ICSBP, possibly via its association with CK2 and PKD kinases. CSN-dependent phosphorylation of TP53 and JUN promotes and protects degradation by the Ubl system, respectively. The chain is COP9 signalosome complex subunit 7b (Cops7b) from Mus musculus (Mouse).